Consider the following 253-residue polypeptide: Indole-3-glycerol phosphate synthase (253 aa).

This sequence belongs to the TrpC family.

It catalyses the reaction 1-(2-carboxyphenylamino)-1-deoxy-D-ribulose 5-phosphate + H(+) = (1S,2R)-1-C-(indol-3-yl)glycerol 3-phosphate + CO2 + H2O. It participates in amino-acid biosynthesis; L-tryptophan biosynthesis; L-tryptophan from chorismate: step 4/5. The protein is Indole-3-glycerol phosphate synthase of Bacillus cereus (strain ATCC 14579 / DSM 31 / CCUG 7414 / JCM 2152 / NBRC 15305 / NCIMB 9373 / NCTC 2599 / NRRL B-3711).